The primary structure comprises 488 residues: 7,8-epoxymelianol synthase CYP88A51 (488 aa).

Residues 4 to 24 (NFLWPMLAMFLGSLVVMFGFL) traverse the membrane as a helical segment. A heme-binding site is contributed by Cys436.

Belongs to the cytochrome P450 family. The cofactor is heme. As to expression, accumulates in mature fruits and in juice vesicles.

It localises to the membrane. It carries out the reaction melianol + reduced [NADPH--hemoprotein reductase] + O2 = 7,8-epoxymelianol + oxidized [NADPH--hemoprotein reductase] + H2O + H(+). It participates in secondary metabolite biosynthesis; terpenoid biosynthesis. In terms of biological role, monooxygenase involved in the biosynthesis of limonoids triterpene natural products such as limonin, a compound with insecticidal activity responsible for the bitter taste in citrus. Catalyzes the epoxidation of melianol to produce 7,8-epoxymelianol. This is 7,8-epoxymelianol synthase CYP88A51 from Citrus sinensis (Sweet orange).